We begin with the raw amino-acid sequence, 418 residues long: NADH-quinone oxidoreductase subunit D (418 aa).

The protein belongs to the complex I 49 kDa subunit family. In terms of assembly, NDH-1 is composed of 14 different subunits. Subunits NuoB, C, D, E, F, and G constitute the peripheral sector of the complex.

It is found in the cell inner membrane. It carries out the reaction a quinone + NADH + 5 H(+)(in) = a quinol + NAD(+) + 4 H(+)(out). NDH-1 shuttles electrons from NADH, via FMN and iron-sulfur (Fe-S) centers, to quinones in the respiratory chain. The immediate electron acceptor for the enzyme in this species is believed to be ubiquinone. Couples the redox reaction to proton translocation (for every two electrons transferred, four hydrogen ions are translocated across the cytoplasmic membrane), and thus conserves the redox energy in a proton gradient. This is NADH-quinone oxidoreductase subunit D from Neisseria meningitidis serogroup C (strain 053442).